The chain runs to 445 residues: DDB1- and CUL4-associated factor 13 (445 aa).

An N6-acetyllysine modification is found at lysine 49. 7 WD repeats span residues 64 to 104, 107 to 146, 149 to 191, 194 to 234, 236 to 276, 280 to 319, and 323 to 362; these read GHRD…CIRT, AHEG…YGDE, PLHT…PICS, WGFD…PLKK, ILDM…TPVM, DHVS…SREV, and KRMQ…KLGV. The segment at 353–441 is required for nucleolar location; sequence KANASEKLGV…LVSEKKKHVV (89 aa).

The protein belongs to the WD repeat DCAF13/WDSOF1 family. As to quaternary structure, part of the small subunit (SSU) processome, composed of more than 70 proteins and the RNA chaperone small nucleolar RNA (snoRNA) U3. Component of the DCX(DCAF13) E3 ubiquitin ligase complex, at least composed of CUL4 (CUL4A or CUL4B), DDB1, DCAF13 and RBX1. Interacts (via WD40 domain) with DDB1. Interacts with ESR1 and LATS1. In terms of tissue distribution, expressed in the endometrium during decidualization. Expression is down-regulated in preeclampsia decidual tissues.

The protein resides in the nucleus. Its subcellular location is the nucleolus. Its pathway is protein modification; protein ubiquitination. In terms of biological role, part of the small subunit (SSU) processome, first precursor of the small eukaryotic ribosomal subunit. During the assembly of the SSU processome in the nucleolus, many ribosome biogenesis factors, an RNA chaperone and ribosomal proteins associate with the nascent pre-rRNA and work in concert to generate RNA folding, modifications, rearrangements and cleavage as well as targeted degradation of pre-ribosomal RNA by the RNA exosome. Participates in the 18S rRNA processing in growing oocytes, being essential for oocyte nonsurrounded nucleolus (NSN) to surrounded nucleolus (SN) transition. Functionally, substrate-recognition component of a DCX (DDB1-CUL4-X-box) E3 ubiquitin-protein ligase complex that plays a key role in embryo preimplantation and is required for normal meiotic cycle progression in oocytes. Acts as a maternal factor that regulates oocyte and zygotic chromatin tightness during maternal to zygotic transition. Also involved in the transformation of the endometrium into the decidua, known as decidualization, providing a solid foundation for implantation of blastocysts. Recognizes the histone methyltransferases SUV39H1 and SUV39H2 and directs them to polyubiquitination and proteasomal degradation, which facilitates the H3K9me3 removal and early zygotic gene expression, essential steps for progressive genome reprogramming and the establishment of pluripotency during preimplantation embryonic development. Supports the spindle assembly and chromosome condensation during oocyte meiotic division by targeting the polyubiquitination and degradation of PTEN, a lipid phosphatase that inhibits PI3K pathway as well as oocyte growth and maturation. Targets PMP22 for polyubiquitination and proteasomal degradation. This Homo sapiens (Human) protein is DDB1- and CUL4-associated factor 13.